A 357-amino-acid polypeptide reads, in one-letter code: 3'-hydroxy-N-methyl-(S)-coclaurine 4'-O-methyltransferase 2 (357 aa).

An S-adenosyl-L-methionine-binding site is contributed by Asp-226. His-264 serves as the catalytic Proton acceptor.

This sequence belongs to the class I-like SAM-binding methyltransferase superfamily. Cation-independent O-methyltransferase family. COMT subfamily. Homodimer. Expressed in roots, stems, leaves and flowers.

It catalyses the reaction (S)-3'-hydroxy-N-methylcoclaurine + S-adenosyl-L-methionine = (S)-reticuline + S-adenosyl-L-homocysteine + H(+). The protein operates within alkaloid biosynthesis; (S)-reticuline biosynthesis; (S)-reticuline from (S)-norcoclaurine: step 4/4. Involved in the biosynthesis of benzylisoquinoline alkaloids. Catalyzes the transfer of the methyl group to the 4'-hydroxyl group of 3'-hydroxy-N-methylcoclaurine to form reticuline. Can also use laudanosoline and, with a lower activity, 6-O-methylnorlaudanosoline and norlaudanosoline as substrates. Also involved in the papaverine biosynthesis. This Papaver somniferum (Opium poppy) protein is 3'-hydroxy-N-methyl-(S)-coclaurine 4'-O-methyltransferase 2.